We begin with the raw amino-acid sequence, 123 residues long: MGAPGGKINRPRTELKKKLFKRRRVLNRERRLRHRVVGAVIDQGLITRHHLKKRASSARANITLSGKKRRKLLQQIRLAQKEKTAMEVEAPSKPARTSEPQLKRQKKTKAPQDVEMKDLEDES.

Disordered regions lie at residues 1–21 (MGAPGGKINRPRTELKKKLFK) and 82–123 (EKTA…EDES).

This is an uncharacterized protein from Homo sapiens (Human).